Consider the following 424-residue polypeptide: Enolase (424 aa).

Q165 provides a ligand contact to (2R)-2-phosphoglycerate. The active-site Proton donor is E207. Mg(2+) contacts are provided by D244, E283, and D310. The (2R)-2-phosphoglycerate site is built by K335, R364, S365, and K386. Residue K335 is the Proton acceptor of the active site.

The protein belongs to the enolase family. Mg(2+) serves as cofactor.

Its subcellular location is the cytoplasm. It localises to the secreted. The protein resides in the cell surface. The catalysed reaction is (2R)-2-phosphoglycerate = phosphoenolpyruvate + H2O. Its pathway is carbohydrate degradation; glycolysis; pyruvate from D-glyceraldehyde 3-phosphate: step 4/5. In terms of biological role, catalyzes the reversible conversion of 2-phosphoglycerate (2-PG) into phosphoenolpyruvate (PEP). It is essential for the degradation of carbohydrates via glycolysis. The sequence is that of Enolase from Chlamydia caviae (strain ATCC VR-813 / DSM 19441 / 03DC25 / GPIC) (Chlamydophila caviae).